The chain runs to 201 residues: Snake venom metalloproteinase trimerelysin-2 (201 aa).

Q1 carries the pyrrolidone carboxylic acid modification. Residues 6–201 (RYIELAIVVD…YNPQCILNAP (196 aa)) enclose the Peptidase M12B domain. N72 is a glycosylation site (N-linked (GlcNAc...) asparagine). 3 disulfides stabilise this stretch: C117-C196, C158-C180, and C160-C163. Residue H142 coordinates Zn(2+). E143 is an active-site residue. Positions 146 and 152 each coordinate Zn(2+).

This sequence belongs to the venom metalloproteinase (M12B) family. P-I subfamily. As to quaternary structure, monomer. The cofactor is Zn(2+). Expressed by the venom gland.

It localises to the secreted. It catalyses the reaction Cleavage of 3-Asn-|-Gln-4, 10-His-|-Leu-11 and 14-Ala-|-Leu-15 in the insulin B chain, and the bond Z-Gly-Pro-|-Leu-Gly-Pro in a small molecule substrate of microbial collagenase.. Its function is as follows. Major venom non-hemorrhagic metalloproteinase. The protein is Snake venom metalloproteinase trimerelysin-2 of Protobothrops flavoviridis (Habu).